We begin with the raw amino-acid sequence, 726 residues long: Probable cadmium-transporting ATPase (726 aa).

In terms of domain architecture, HMA spans aspartate 11–phenylalanine 74. Cd(2+) is bound by residues cysteine 22 and cysteine 25. Transmembrane regions (helical) follow at residues serine 105–glycine 125, leucine 129–valine 149, threonine 163–alanine 179, isoleucine 335–tryptophan 355, and leucine 363–valine 383. The 4-aspartylphosphate intermediate role is filled by aspartate 414. The next 2 helical transmembrane spans lie at leucine 671–isoleucine 693 and threonine 698–leucine 720.

It belongs to the cation transport ATPase (P-type) (TC 3.A.3) family. Type IB subfamily.

Its subcellular location is the cell membrane. It catalyses the reaction Cd(2+)(in) + ATP + H2O = Cd(2+)(out) + ADP + phosphate + H(+). Its function is as follows. Couples the hydrolysis of ATP with the export of cadmium. The chain is Probable cadmium-transporting ATPase (cadA) from Staphylococcus aureus (strain MRSA252).